Consider the following 429-residue polypeptide: Threonine synthase (429 aa).

An N6-(pyridoxal phosphate)lysine modification is found at lysine 108.

It belongs to the threonine synthase family. Requires pyridoxal 5'-phosphate as cofactor.

The enzyme catalyses O-phospho-L-homoserine + H2O = L-threonine + phosphate. It functions in the pathway amino-acid biosynthesis; L-threonine biosynthesis; L-threonine from L-aspartate: step 5/5. In terms of biological role, catalyzes the gamma-elimination of phosphate from L-phosphohomoserine and the beta-addition of water to produce L-threonine. The protein is Threonine synthase (thrC) of Buchnera aphidicola subsp. Acyrthosiphon pisum (strain APS) (Acyrthosiphon pisum symbiotic bacterium).